The chain runs to 301 residues: Immediate early response gene 5-like protein (301 aa).

Belongs to the IER family.

The protein is Immediate early response gene 5-like protein (ier5l) of Danio rerio (Zebrafish).